We begin with the raw amino-acid sequence, 692 residues long: Elongation factor G (692 aa).

Positions 8–282 constitute a tr-type G domain; that stretch reads ENTRNIGIMA…AVIDYLPSPL (275 aa). Residues 17–24, 81–85, and 135–138 contribute to the GTP site; these read AHIDAGKT, DTPGH, and NKMD.

It belongs to the TRAFAC class translation factor GTPase superfamily. Classic translation factor GTPase family. EF-G/EF-2 subfamily.

The protein resides in the cytoplasm. Catalyzes the GTP-dependent ribosomal translocation step during translation elongation. During this step, the ribosome changes from the pre-translocational (PRE) to the post-translocational (POST) state as the newly formed A-site-bound peptidyl-tRNA and P-site-bound deacylated tRNA move to the P and E sites, respectively. Catalyzes the coordinated movement of the two tRNA molecules, the mRNA and conformational changes in the ribosome. The polypeptide is Elongation factor G (Bacillus cereus (strain ATCC 14579 / DSM 31 / CCUG 7414 / JCM 2152 / NBRC 15305 / NCIMB 9373 / NCTC 2599 / NRRL B-3711)).